The primary structure comprises 202 residues: Guanylyl cyclase-activating protein 1 (202 aa).

Glycine 2 carries the N-myristoyl glycine lipid modification. A Deamidated asparagine modification is found at asparagine 3. 4 consecutive EF-hand domains span residues 31–49, 51–86, 87–122, and 131–166; these read SGQL…KNLS, SASQ…VLKG, KVEQ…IRTI, and SAEE…DQML. The Ca(2+) site is built by aspartate 64, asparagine 66, aspartate 68, tyrosine 70, glutamate 75, aspartate 100, aspartate 102, asparagine 104, cysteine 106, glutamate 111, aspartate 144, asparagine 146, aspartate 148, glutamate 150, and glutamate 155.

As to quaternary structure, homodimer. As to expression, in the retina, expressed in rod photoreceptors (at protein level). Expressed in cone photoreceptors.

The protein resides in the membrane. The protein localises to the photoreceptor inner segment. It is found in the cell projection. Its subcellular location is the cilium. It localises to the photoreceptor outer segment. Stimulates retinal guanylyl cyclase when free calcium ions concentration is low and inhibits guanylyl cyclase when free calcium ions concentration is elevated. This Ca(2+)-sensitive regulation of retinal guanylyl cyclase is a key event in recovery of the dark state of rod photoreceptors following light exposure. May be involved in cone photoreceptor light response and recovery of response in bright light. The polypeptide is Guanylyl cyclase-activating protein 1 (Guca1a) (Mus musculus (Mouse)).